The sequence spans 791 residues: ABC multidrug transporter mdr2 (791 aa).

N-linked (GlcNAc...) asparagine glycosylation is present at asparagine 147. Transmembrane regions (helical) follow at residues 182–202 and 220–240; these read ALAF…PFSI and LFGL…TLGA. In terms of domain architecture, ABC transmembrane type-1 spans 182-471; sequence ALAFLFLLVS…LSSFYSELMK (290 aa). Residue asparagine 303 is glycosylated (N-linked (GlcNAc...) asparagine). 2 helical membrane passes run 307–324 and 326–346; these read GLRA…MAYV and LKLS…AFFY. N-linked (GlcNAc...) asparagine glycosylation is found at asparagine 352 and asparagine 421. The next 2 membrane-spanning stretches (helical) occupy residues 422–442 and 445–465; these read MTIL…AITI and LTSF…LSSF. The ABC transporter domain occupies 504 to 741; that stretch reads IRFENVTFSY…PDGAFTKLME (238 aa). Residue asparagine 508 is glycosylated (N-linked (GlcNAc...) asparagine). Position 539–546 (539–546) interacts with ATP; that stretch reads GPSGGGKS. An N-linked (GlcNAc...) asparagine glycan is attached at asparagine 692. Over residues 754–769 the composition is skewed to polar residues; the sequence is ANTPANPVAQETSWDL. Residues 754 to 791 form a disordered region; the sequence is ANTPANPVAQETSWDLQSDDGTEISEDTNIPSEPRTID. The segment covering 770–779 has biased composition (acidic residues); that stretch reads QSDDGTEISE.

Belongs to the ABC transporter superfamily. ABCB family. Mitochondrial peptide exporter (TC 3.A.1.212) subfamily.

Its subcellular location is the cell membrane. In terms of biological role, pleiotropic ABC efflux transporter that may be involved in A.fumigatus adaptation to azoles. The sequence is that of ABC multidrug transporter mdr2 from Aspergillus fumigatus (strain ATCC MYA-4609 / CBS 101355 / FGSC A1100 / Af293) (Neosartorya fumigata).